Here is a 153-residue protein sequence, read N- to C-terminus: Putative type II secretion system protein M (153 aa).

Residues 1–16 (MIKSWWAEKSTSEKQI) lie on the Cytoplasmic side of the membrane. The helical transmembrane segment at 17-37 (VAALAVLSLGVFCWLGVIKPI) threads the bilayer. The Periplasmic portion of the chain corresponds to 38-153 (DTYIAEHQSH…LRHLSFREQQ (116 aa)).

Belongs to the GSP M family. Type II secretion system is composed of four main components: the outer membrane complex, the inner membrane complex, the cytoplasmic secretion ATPase and the periplasm-spanning pseudopilus. Forms homodimers. Interacts with GspL. Interacts with GspE and GspF.

The protein localises to the cell inner membrane. Inner membrane component of the type II secretion system required for the energy-dependent secretion of extracellular factors such as proteases and toxins from the periplasm. Plays a role in the complex assembly and recruits GspL resulting in a stable complex in the inner membrane. Provides thus a link between the energy-providing GspE protein in the cytoplasm and the rest of the T2SS machinery. In Escherichia coli (strain K12), this protein is Putative type II secretion system protein M (gspM).